The primary structure comprises 340 residues: Adenosine deaminase (340 aa).

Residues His-15 and His-17 each coordinate Zn(2+). The substrate site is built by His-17, Asp-19, and Gly-172. Residue His-199 participates in Zn(2+) binding. Glu-202 (proton donor) is an active-site residue. Asp-279 provides a ligand contact to Zn(2+).

This sequence belongs to the metallo-dependent hydrolases superfamily. Adenosine and AMP deaminases family. Adenosine deaminase subfamily. The cofactor is Zn(2+).

The enzyme catalyses adenosine + H2O + H(+) = inosine + NH4(+). The catalysed reaction is 2'-deoxyadenosine + H2O + H(+) = 2'-deoxyinosine + NH4(+). Catalyzes the hydrolytic deamination of adenosine and 2-deoxyadenosine. This is Adenosine deaminase from Streptococcus agalactiae serotype III (strain NEM316).